Reading from the N-terminus, the 131-residue chain is Profilin-3 (131 aa).

The protein belongs to the profilin family. As to quaternary structure, occurs in many kinds of cells as a complex with monomeric actin in a 1:1 ratio.

The protein localises to the cytoplasm. Its subcellular location is the cytoskeleton. Functionally, binds to actin and affects the structure of the cytoskeleton. At high concentrations, profilin prevents the polymerization of actin, whereas it enhances it at low concentrations. By binding to PIP2, it inhibits the formation of IP3 and DG. In Malus domestica (Apple), this protein is Profilin-3.